Here is a 1610-residue protein sequence, read N- to C-terminus: Voltage-dependent L-type calcium channel subunit alpha-1D (1610 aa).

Positions 1 to 99 (MMMMMMKKMQ…SKKQGNSSNS (99 aa)) are disordered. Residues 1 to 125 (MMMMMMKKMQ…RACISIVEWK (125 aa)) are Cytoplasmic-facing. Residues 37–51 (GPTSQPNSSKQTVLS) show a composition bias toward polar residues. Positions 53–66 (QAAIDAARQAKAAQ) are enriched in low complexity. The segment covering 81-92 (QRKRQQYAKSKK) has biased composition (basic residues). The I repeat unit spans residues 112 to 408 (NPIRRACISI…LVLGVLSGEF (297 aa)). The helical transmembrane segment at 126–144 (PFDIFILLAIFANCVALAI) threads the bilayer. At 145–162 (YIPFPEDDSNSTNHNLEK) the chain is on the extracellular side. Asn154 carries an N-linked (GlcNAc...) asparagine glycan. The helical transmembrane segment at 163–182 (VEYAFLIIFTVETFLKIIAY) threads the bilayer. At 183 to 194 (GLLLHPNAYVRN) the chain is on the cytoplasmic side. A helical transmembrane segment spans residues 195–213 (GWNLLDFVIVIVGLFSVIL). Residues 214–234 (EQLTKETEGGNHSSGKSGGFD) are Extracellular-facing. Residue Asn224 is glycosylated (N-linked (GlcNAc...) asparagine). A helical transmembrane segment spans residues 235–253 (VKALRAFRVLRPLRLVSGV). Residues 254–272 (PSLQVVLNSIIKAMVPLLH) lie on the Cytoplasmic side of the membrane. A helical membrane pass occupies residues 273–292 (IALLVLFVIIIYAIIGLELF). The Extracellular portion of the chain corresponds to 293–380 (IGKMHKTCFF…WMNDAMGFEL (88 aa)). Asn328 carries an N-linked (GlcNAc...) asparagine glycan. Residue Glu363 participates in Ca(2+) binding. The chain crosses the membrane as a helical span at residues 381–405 (PWVYFVSLVIFGSFFVLNLVLGVLS). Topologically, residues 406 to 522 (GEFSKEREKA…RRCRAAVKSV (117 aa)) are cytoplasmic. Positions 428–445 (EQLEEDLKGYLDWITQAE) are binding to the beta subunit. A disordered region spans residues 448–487 (DPENEEEGGEEGKRNTSMPTSETESVNTENVSGEGETQGS). Residues 462-487 (NTSMPTSETESVNTENVSGEGETQGS) are compositionally biased toward polar residues. An II repeat occupies 508 to 754 (NRFNRRRCRA…VFLAIAVDNL (247 aa)). A helical transmembrane segment spans residues 523 to 542 (TFYWLVIVLVFLNTLTISSE). Over 543 to 557 (HYNQPDWLTQIQDIA) the chain is Extracellular. Residues 558–576 (NKVLLALFTCEMLVKMYSL) traverse the membrane as a helical segment. Residues 577–584 (GLQAYFVS) are Cytoplasmic-facing. A helical membrane pass occupies residues 585-603 (LFNRFDCFVVCGGITETIL). Residues 604 to 613 (VELELMSPLG) lie on the Extracellular side of the membrane. Residues 614–632 (VSVFRCVRLLRIFKVTRHW) form a helical membrane-spanning segment. Residues 633–651 (TSLSNLVASLLNSMKSIAS) are Cytoplasmic-facing. The helical transmembrane segment at 652–672 (LLLLLFLFIIIFSLLGMQLFG) threads the bilayer. At 673–726 (GKFNFDETQTKRSTFDNFPQALLTVFQILTGEDWNAVMYDGIMAYGGPSSSGMI) the chain is on the extracellular side. Glu704 is a Ca(2+) binding site. The helical transmembrane segment at 727–751 (VCIYFIILFICGNYILLNVFLAIAV) threads the bilayer. Over 752–884 (DNLADAESLN…VGCHKLINHH (133 aa)) the chain is Cytoplasmic. Positions 765 to 789 (KEEAEEKERKKIARKESLENKKNNK) are enriched in basic and acidic residues. The tract at residues 765–846 (KEEAEEKERK…VPAGPRPRRI (82 aa)) is disordered. A compositionally biased stretch (polar residues) spans 790–801 (PEVNQIANSDNK). Acidic residues predominate over residues 824–836 (VGEEEEEEEEEPE). An III repeat occupies 871-1153 (NPIRVGCHKL…IFVGFVIVTF (283 aa)). The helical transmembrane segment at 885 to 903 (IFTNLILVFIMLSSAALAA) threads the bilayer. The Extracellular segment spans residues 904–919 (EDPIRSHSFRNTILGY). A helical transmembrane segment spans residues 920 to 939 (FDYAFTAIFTVEILLKMTTF). Over 940–951 (GAFLHKGAFCRN) the chain is Cytoplasmic. Residues 952 to 970 (YFNLLDMLVVGVSLVSFGI) traverse the membrane as a helical segment. The Extracellular segment spans residues 971-976 (QSSAIS). A helical membrane pass occupies residues 977 to 996 (VVKILRVLRVLRPLRAINRA). Over 997-1015 (KGLKHVVQCVFVAIRTIGN) the chain is Cytoplasmic. Residues 1016 to 1035 (IMIVTTLLQFMFACIGVQLF) traverse the membrane as a helical segment. Over 1036–1125 (KGKFYRCTDE…AGPVYNHRVE (90 aa)) the chain is Extracellular. Residues 1073-1163 (RIWQNSDFNF…QEQGEKEYKN (91 aa)) are dihydropyridine binding. Ca(2+) is bound at residue Glu1099. A helical membrane pass occupies residues 1126–1146 (ISIFFIIYIIIVAFFMMNIFV). The Cytoplasmic segment spans residues 1147–1203 (GFVIVTFQEQGEKEYKNCELDKNQRQCVEYALKARPLRRYIPKNPYQYKFWYVVNSS). The IV repeat unit spans residues 1190 to 1465 (NPYQYKFWYV…LFVAVIMDNF (276 aa)). The chain crosses the membrane as a helical span at residues 1204-1222 (PFEYMMFVLIMLNTLCLAM). Topologically, residues 1223-1237 (QHYEQSKMFNDAMDI) are extracellular. A helical membrane pass occupies residues 1238–1257 (LNMVFTGVFTVEMVLKVIAF). Topologically, residues 1258-1264 (KPKGYFS) are cytoplasmic. The chain crosses the membrane as a helical span at residues 1265–1286 (DAWNTFDSLIVIGSIIDVALSE). Residues 1287-1311 (ADPTESESLPLPTATPGNSEESNRI) lie on the Extracellular side of the membrane. Residues 1312-1331 (SITFFRLFRVMRLVKLLSRG) traverse the membrane as a helical segment. Residues 1332-1350 (EGIRTLLWTFIKSFQALPY) lie on the Cytoplasmic side of the membrane. Residues 1351–1370 (VALLIAMLFFIYAVIGMQMF) form a helical membrane-spanning segment. The Extracellular portion of the chain corresponds to 1371 to 1437 (GKVAMRDNNQ…GEEYTCGSNF (67 aa)). The tract at residues 1418–1484 (LCDPDSDYNP…LGPHHLDEFK (67 aa)) is dihydropyridine binding. Residues 1430-1473 (EYTCGSNFAIVYFISFYMLCAFLIINLFVAVIMDNFDYLTRDWS) are phenylalkylamine binding. A helical transmembrane segment spans residues 1438–1462 (AIVYFISFYMLCAFLIINLFVAVIM). Residues 1463–1610 (DNFDYLTRDW…CFLSPSRSRS (148 aa)) are Cytoplasmic-facing.

This sequence belongs to the calcium channel alpha-1 subunit (TC 1.A.1.11) family. CACNA1D subfamily. Voltage-dependent calcium channels are multisubunit complexes, consisting of alpha-1, alpha-2, beta and delta subunits in a 1:1:1:1 ratio. The channel activity is directed by the pore-forming and voltage-sensitive alpha-1 subunit. In many cases, this subunit is sufficient to generate voltage-sensitive calcium channel activity. The auxiliary subunits beta and alpha-2/delta linked by a disulfide bridge regulate the channel activity. Interacts with RIMBP2. Interacts with CABP1 and CABP4, resulting in a near elimination of calcium-dependent inactivation of the channel. In terms of tissue distribution, expressed in brain, heart and skeletal muscle.

The protein resides in the membrane. It catalyses the reaction Ca(2+)(in) = Ca(2+)(out). Its function is as follows. Voltage-sensitive calcium channels (VSCC) mediate the entry of calcium ions into excitable cells and are also involved in a variety of calcium-dependent processes, including muscle contraction, hormone or neurotransmitter release, gene expression, cell motility, cell division and cell death. The isoform alpha-1D gives rise to L-type calcium currents. Long-lasting (L-type) calcium channels belong to the 'high-voltage activated' (HVA) group. They are blocked by dihydropyridines (DHP), phenylalkylamines, and by benzothiazepines. This chain is Voltage-dependent L-type calcium channel subunit alpha-1D (CACNA1D), found in Mesocricetus auratus (Golden hamster).